Reading from the N-terminus, the 70-residue chain is DNA-directed RNA polymerase subunit omega (70 aa).

The protein belongs to the RNA polymerase subunit omega family. In terms of assembly, the RNAP catalytic core consists of 2 alpha, 1 beta, 1 beta' and 1 omega subunit. When a sigma factor is associated with the core the holoenzyme is formed, which can initiate transcription.

The catalysed reaction is RNA(n) + a ribonucleoside 5'-triphosphate = RNA(n+1) + diphosphate. Promotes RNA polymerase assembly. Latches the N- and C-terminal regions of the beta' subunit thereby facilitating its interaction with the beta and alpha subunits. The polypeptide is DNA-directed RNA polymerase subunit omega (Clostridium perfringens (strain ATCC 13124 / DSM 756 / JCM 1290 / NCIMB 6125 / NCTC 8237 / Type A)).